Reading from the N-terminus, the 156-residue chain is 6,7-dimethyl-8-ribityllumazine synthase (156 aa).

5-amino-6-(D-ribitylamino)uracil-binding positions include Phe22, 56 to 58 (AFE), and 80 to 82 (AVI). (2S)-2-hydroxy-3-oxobutyl phosphate is bound at residue 85–86 (ST). His88 acts as the Proton donor in catalysis. Phe113 contacts 5-amino-6-(D-ribitylamino)uracil. Arg127 is a binding site for (2S)-2-hydroxy-3-oxobutyl phosphate.

Belongs to the DMRL synthase family.

The enzyme catalyses (2S)-2-hydroxy-3-oxobutyl phosphate + 5-amino-6-(D-ribitylamino)uracil = 6,7-dimethyl-8-(1-D-ribityl)lumazine + phosphate + 2 H2O + H(+). It participates in cofactor biosynthesis; riboflavin biosynthesis; riboflavin from 2-hydroxy-3-oxobutyl phosphate and 5-amino-6-(D-ribitylamino)uracil: step 1/2. Its function is as follows. Catalyzes the formation of 6,7-dimethyl-8-ribityllumazine by condensation of 5-amino-6-(D-ribitylamino)uracil with 3,4-dihydroxy-2-butanone 4-phosphate. This is the penultimate step in the biosynthesis of riboflavin. This chain is 6,7-dimethyl-8-ribityllumazine synthase, found in Caldicellulosiruptor saccharolyticus (strain ATCC 43494 / DSM 8903 / Tp8T 6331).